Here is a 156-residue protein sequence, read N- to C-terminus: Endoribonuclease YbeY (156 aa).

Zn(2+)-binding residues include H117, H121, and H127.

Belongs to the endoribonuclease YbeY family. Zn(2+) serves as cofactor.

It localises to the cytoplasm. Functionally, single strand-specific metallo-endoribonuclease involved in late-stage 70S ribosome quality control and in maturation of the 3' terminus of the 16S rRNA. The sequence is that of Endoribonuclease YbeY from Shewanella piezotolerans (strain WP3 / JCM 13877).